Consider the following 179-residue polypeptide: Large ribosomal subunit protein uL6 (179 aa).

This sequence belongs to the universal ribosomal protein uL6 family. In terms of assembly, part of the 50S ribosomal subunit.

This protein binds to the 23S rRNA, and is important in its secondary structure. It is located near the subunit interface in the base of the L7/L12 stalk, and near the tRNA binding site of the peptidyltransferase center. The polypeptide is Large ribosomal subunit protein uL6 (Syntrophus aciditrophicus (strain SB)).